The sequence spans 106 residues: ATP-dependent Clp protease adapter protein ClpS (106 aa).

This sequence belongs to the ClpS family. As to quaternary structure, binds to the N-terminal domain of the chaperone ClpA.

Involved in the modulation of the specificity of the ClpAP-mediated ATP-dependent protein degradation. This Salmonella arizonae (strain ATCC BAA-731 / CDC346-86 / RSK2980) protein is ATP-dependent Clp protease adapter protein ClpS.